The following is a 72-amino-acid chain: Translation initiation factor IF-1 (72 aa).

The S1-like domain maps to 1-72; the sequence is MSKEDVIEVE…TRGRITWRAK (72 aa).

Belongs to the IF-1 family. In terms of assembly, component of the 30S ribosomal translation pre-initiation complex which assembles on the 30S ribosome in the order IF-2 and IF-3, IF-1 and N-formylmethionyl-tRNA(fMet); mRNA recruitment can occur at any time during PIC assembly.

The protein resides in the cytoplasm. In terms of biological role, one of the essential components for the initiation of protein synthesis. Stabilizes the binding of IF-2 and IF-3 on the 30S subunit to which N-formylmethionyl-tRNA(fMet) subsequently binds. Helps modulate mRNA selection, yielding the 30S pre-initiation complex (PIC). Upon addition of the 50S ribosomal subunit IF-1, IF-2 and IF-3 are released leaving the mature 70S translation initiation complex. The chain is Translation initiation factor IF-1 from Acetivibrio thermocellus (strain ATCC 27405 / DSM 1237 / JCM 9322 / NBRC 103400 / NCIMB 10682 / NRRL B-4536 / VPI 7372) (Clostridium thermocellum).